The chain runs to 239 residues: Orotidine 5'-phosphate decarboxylase (239 aa).

Residues aspartate 12, lysine 34, 61-70 (DLKFHDIPNT), threonine 125, arginine 188, glutamine 197, glycine 217, and arginine 218 contribute to the substrate site. Lysine 63 serves as the catalytic Proton donor.

Belongs to the OMP decarboxylase family. Type 1 subfamily. Homodimer.

It catalyses the reaction orotidine 5'-phosphate + H(+) = UMP + CO2. It participates in pyrimidine metabolism; UMP biosynthesis via de novo pathway; UMP from orotate: step 2/2. Its function is as follows. Catalyzes the decarboxylation of orotidine 5'-monophosphate (OMP) to uridine 5'-monophosphate (UMP). The protein is Orotidine 5'-phosphate decarboxylase of Syntrophomonas wolfei subsp. wolfei (strain DSM 2245B / Goettingen).